Consider the following 344-residue polypeptide: Cathepsin B-like cysteine proteinase 5 (344 aa).

A signal peptide spans 1-15 (MWKLSAILLVAAASA). A propeptide spanning residues 16–81 (VVIPGHREAP…DIVATEVSDA (66 aa)) is cleaved from the precursor. Intrachain disulfides connect C95/C124, C107/C154, C143/C213, C144/C150, C183/C217, and C191/C203. The active site involves C110. Residues H286 and N306 contribute to the active site.

It belongs to the peptidase C1 family.

This Caenorhabditis elegans protein is Cathepsin B-like cysteine proteinase 5 (cpr-5).